Reading from the N-terminus, the 403-residue chain is Cell cycle checkpoint control protein RAD9B (403 aa).

A disordered region spans residues 285 to 347 (PLSQARRSHP…ASAGQDDIFE (63 aa)). Residues serine 354 and serine 363 each carry the phosphoserine modification.

Belongs to the rad9 family. As to quaternary structure, interacts with HUS1, HUS1B, RAD1, RAD9A and RAD17.

This is Cell cycle checkpoint control protein RAD9B (Rad9b) from Mus musculus (Mouse).